A 146-amino-acid polypeptide reads, in one-letter code: MKLHELYPAEGSRKVRNRVGRGAATGNGKTSGRGQKGQKARSGGKVRPGFEGGQLPLFRRLPKRGFTNINRKEFAVVNLEQLNRFEEGTEVTPELLIETGVVKNAKAGIKVLGNGSLEKKLTVKAHNFSASAAEAIDAKGGAHEVI.

Over residues 1 to 13 (MKLHELYPAEGSR) the composition is skewed to basic and acidic residues. The tract at residues 1 to 55 (MKLHELYPAEGSRKVRNRVGRGAATGNGKTSGRGQKGQKARSGGKVRPGFEGGQL) is disordered. Residues 23–35 (AATGNGKTSGRGQ) show a composition bias toward gly residues.

Belongs to the universal ribosomal protein uL15 family. As to quaternary structure, part of the 50S ribosomal subunit.

In terms of biological role, binds to the 23S rRNA. The protein is Large ribosomal subunit protein uL15 of Staphylococcus carnosus (strain TM300).